The chain runs to 394 residues: MVRWLTAGESHGPALVATVEGLPAGIRVTSDDIAAELARRRLGHGRGARMSFERDVVELLGGLRHGVSLGGPISVVVRNSEWPKWERVMSPDPVDPAALAGLGRNAPLTRPRPGHADLAGMQKYGFDDARPVLERASARETAARVALGTAAKALLRQAYGIELLSHVVAIGAAEVPPGLPAPTSLAAIDANPVRCADQATSERMVAEIDAAQADSDTLGGIVEVLAYGCPPGLGSYVHGDRRLDARLAGELMGIQAIKGVEFGDGFTTARRRGSVAHDEIEPVGGVGRRVRRATDRAGGVEGGMTTGEPLRVRVAMKPISSLTRPLSTVDVTTGEAAVAINQRSDVCAVPAAGVVTEAMVALVLADAALEKFGGDSVEETRRNCEGYLKSLVIH.

Residues Arg-40 and Arg-46 each coordinate NADP(+). FMN contacts are provided by residues 135–137, 255–256, Gly-302, 317–321, and Arg-343; these read RAS, QA, and KPISS.

Belongs to the chorismate synthase family. In terms of assembly, homotetramer. It depends on FMNH2 as a cofactor.

The catalysed reaction is 5-O-(1-carboxyvinyl)-3-phosphoshikimate = chorismate + phosphate. Its pathway is metabolic intermediate biosynthesis; chorismate biosynthesis; chorismate from D-erythrose 4-phosphate and phosphoenolpyruvate: step 7/7. Its function is as follows. Catalyzes the anti-1,4-elimination of the C-3 phosphate and the C-6 proR hydrogen from 5-enolpyruvylshikimate-3-phosphate (EPSP) to yield chorismate, which is the branch point compound that serves as the starting substrate for the three terminal pathways of aromatic amino acid biosynthesis. This reaction introduces a second double bond into the aromatic ring system. This is Chorismate synthase from Frankia alni (strain DSM 45986 / CECT 9034 / ACN14a).